The primary structure comprises 806 residues: Protein translocase subunit SecA 2 (806 aa).

ATP is bound by residues Gln-122, 140–144, and Asp-533; that span reads GEGKT.

This sequence belongs to the SecA family. In terms of assembly, monomer and homodimer. Part of the essential Sec protein translocation apparatus which comprises SecA, SecYEG and auxiliary proteins SecDF. Other proteins may also be involved.

The protein resides in the cell membrane. The protein localises to the cytoplasm. It carries out the reaction ATP + H2O + cellular proteinSide 1 = ADP + phosphate + cellular proteinSide 2.. In terms of biological role, part of the Sec protein translocase complex. Interacts with the SecYEG preprotein conducting channel. Has a central role in coupling the hydrolysis of ATP to the transfer of proteins into and across the cell membrane, serving as an ATP-driven molecular motor driving the stepwise translocation of polypeptide chains across the membrane. This Mycobacterium ulcerans (strain Agy99) protein is Protein translocase subunit SecA 2.